Reading from the N-terminus, the 173-residue chain is Probable DNA-directed RNA polymerase subunit delta (173 aa).

The HTH HARE-type domain occupies leucine 14–tryptophan 81. A disordered region spans residues glutamine 86–arginine 173. The span at isoleucine 109–arginine 173 shows a compositional bias: acidic residues.

The protein belongs to the RpoE family. As to quaternary structure, RNAP is composed of a core of 2 alpha, a beta and a beta' subunits. The core is associated with a delta subunit and one of several sigma factors.

Participates in both the initiation and recycling phases of transcription. In the presence of the delta subunit, RNAP displays an increased specificity of transcription, a decreased affinity for nucleic acids, and an increased efficiency of RNA synthesis because of enhanced recycling. The polypeptide is Probable DNA-directed RNA polymerase subunit delta (Oceanobacillus iheyensis (strain DSM 14371 / CIP 107618 / JCM 11309 / KCTC 3954 / HTE831)).